Here is a 435-residue protein sequence, read N- to C-terminus: Protoheme IX farnesyltransferase, mitochondrial (435 aa).

Residues 1–35 constitute a mitochondrion transit peptide; sequence MPALCATYLIHSGNLRACLRIVPLTKPSVVIAYRH. The next 6 membrane-spanning stretches (helical) occupy residues 135 to 155, 157 to 177, 212 to 232, 250 to 270, 324 to 344, and 401 to 421; these read VLVMLSAICSYALSPYPATVL, LLSLTVGTTLCSAAANGINMG, GVIGTAILYAGVNPTVALLGA, IINTWFGAITGAIPPLMGWAA, VALRYSLLMFPLCFGLSYYGI, and FWVSVLHLPAVLILAIVHKKG.

Belongs to the UbiA prenyltransferase family.

Its subcellular location is the mitochondrion membrane. Functionally, converts protoheme IX and farnesyl diphosphate to heme O. The chain is Protoheme IX farnesyltransferase, mitochondrial (COX10) from Eremothecium gossypii (strain ATCC 10895 / CBS 109.51 / FGSC 9923 / NRRL Y-1056) (Yeast).